A 190-amino-acid chain; its full sequence is Peptidyl-prolyl cis-trans isomerase A (190 aa).

The N-terminal stretch at 1-23 (MSKRILAAVVTVLSLTAFSPAFA) is a signal peptide. One can recognise a PPIase cyclophilin-type domain in the interval 26 to 187 (TSTHVLLTTS…KPIVIQSAKI (162 aa)).

Belongs to the cyclophilin-type PPIase family.

The protein localises to the periplasm. It carries out the reaction [protein]-peptidylproline (omega=180) = [protein]-peptidylproline (omega=0). Functionally, PPIases accelerate the folding of proteins. It catalyzes the cis-trans isomerization of proline imidic peptide bonds in oligopeptides. The sequence is that of Peptidyl-prolyl cis-trans isomerase A (rotA) from Dickeya dadantii (strain 3937) (Erwinia chrysanthemi (strain 3937)).